The following is a 764-amino-acid chain: Oxysterol-binding protein-related protein 10 (764 aa).

Residues 1–74 (MERAVQGTDG…PSGGGGRRRE (74 aa)) form a disordered region. Composition is skewed to low complexity over residues 15 to 47 (NSSS…SAAA) and 55 to 65 (RSSPGSVAASP). 2 positions are modified to phosphoserine: Ser29 and Ser30. Position 38 is an omega-N-methylarginine (Arg38). A phosphoserine mark is found at Ser57, Ser60, and Ser64. The region spanning 74-171 (EPALEGVLSK…WVTQLRACAK (98 aa)) is the PH domain. The residue at position 196 (Thr196) is a Phosphothreonine. Phosphoserine occurs at positions 201, 209, and 223. 2 disordered regions span residues 304 to 335 (GQPS…NGTL) and 354 to 391 (AEDE…TELG). A compositionally biased stretch (polar residues) spans 359-370 (TSQPEPEPNSGS). A compositionally biased stretch (acidic residues) spans 374 to 389 (LSEDEKSDNEDKEETE). A 1,2-diacyl-sn-glycero-3-phospho-(1D-myo-inositol 4-phosphate) is bound by residues 413-418 (LTKVVL) and 477-480 (KPYN). Residues 413 to 418 (LTKVVL) and Asn480 contribute to the a 1,2-diacyl-sn-glycero-3-phospho-L-serine site. The segment at 501–520 (KRTASRSPASCHEHPMADDP) is disordered. Positions 511–520 (CHEHPMADDP) are enriched in basic and acidic residues. A 1,2-diacyl-sn-glycero-3-phospho-(1D-myo-inositol 4-phosphate) is bound at residue 535-536 (HH). Ser561 lines the a 1,2-diacyl-sn-glycero-3-phospho-L-serine pocket. Residues 713–740 (DIDAATEQKRHLEEKQRVEERKRENLRT) adopt a coiled-coil conformation. 3 residues coordinate a 1,2-diacyl-sn-glycero-3-phospho-(1D-myo-inositol 4-phosphate): Lys721, Glu725, and Arg729.

This sequence belongs to the OSBP family. Interacts with OSBPL9. Interacts with DIAPH1.

The protein localises to the cytoplasm. It is found in the cytoskeleton. Probable lipid transporter involved in lipid countertransport between the endoplasmic reticulum and the plasma membrane. Its ability to bind phosphatidylserine, suggests that it specifically exchanges phosphatidylserine with phosphatidylinositol 4-phosphate (PI4P), delivering phosphatidylserine to the plasma membrane in exchange for PI4P. Plays a role in negative regulation of lipid biosynthesis. Negatively regulates APOB secretion from hepatocytes. Binds cholesterol and acidic phospholipids. Also binds 25-hydroxycholesterol. Binds phosphatidylserine. This is Oxysterol-binding protein-related protein 10 (OSBPL10) from Homo sapiens (Human).